Here is an 822-residue protein sequence, read N- to C-terminus: Sushi domain-containing protein 2 (822 aa).

An N-terminal signal peptide occupies residues 1–27 (MKPALLPWALLLLATALGPGPGPTADA). Positions 28-66 (QESCSMRCGALDGPCSCHPTCSGLGTCCLDFRDFCLEIL) constitute an SMB domain. Topologically, residues 28 to 785 (QESCSMRCGA…PKCQPGRSYA (758 aa)) are extracellular. 7 cysteine pairs are disulfide-bonded: cysteine 31–cysteine 35, cysteine 31–cysteine 44, cysteine 35–cysteine 62, cysteine 42–cysteine 44, cysteine 42–cysteine 55, cysteine 48–cysteine 54, and cysteine 55–cysteine 62. Residues asparagine 162 and asparagine 177 are each glycosylated (N-linked (GlcNAc...) asparagine). Residues 285 to 433 (PVAWARTQCQ…PDCPRYMQRR (149 aa)) form the AMOP domain. Residues 445 to 639 (RLASAFGDPH…NWTVHNASSL (195 aa)) enclose the VWFD domain. Asparagine 522 carries an N-linked (GlcNAc...) asparagine glycan. One can recognise a Sushi domain in the interval 723–780 (VSCGWLAPPPNGQKEGNRYLAGSTIYFHCDNGYSLAGAETSTCQADGTWSSPTPKCQP). Intrachain disulfides connect cysteine 725–cysteine 765 and cysteine 751–cysteine 778. The chain crosses the membrane as a helical span at residues 786–806 (VLLGIIFGGLAVVAAVALVYV). The Cytoplasmic segment spans residues 807–822 (LLRRRKGNTHVWGAQP).

As to quaternary structure, interacts with LGALS1; leads to an increased amount of LGALS1 on the cell surface. Interacts with GPR15LG; the interaction is direct. Highly expressed in breast cancer, but shows a restricted expression pattern in normal tissues such as adipose, adrenal gland, kidney, lung, mammary gland, placenta, thyroid, trachea, and uterus. Also expressed in colon; down-regulated in colon cancer tissues.

Its subcellular location is the cell membrane. May be a cytokine receptor for GPR15LG. May be a tumor suppressor; together with GPR15LG has a growth inhibitory effect on colon cancer cells which includes G1 cell cycle arrest. May play a role in breast tumorigenesis. This is Sushi domain-containing protein 2 (SUSD2) from Homo sapiens (Human).